Here is a 475-residue protein sequence, read N- to C-terminus: GDP-fucose protein O-fucosyltransferase 3 (475 aa).

Residues 1–8 (MVRMRRKR) lie on the Cytoplasmic side of the membrane. Residues 9–29 (LWASCICFAAFFFLLVTLQVI) traverse the membrane as a helical; Signal-anchor for type II membrane protein segment. Over 30-475 (TELGNSENKA…QEFWMLVFKQ (446 aa)) the chain is Lumenal. 3 N-linked (GlcNAc...) asparagine glycosylation sites follow: asparagine 107, asparagine 165, and asparagine 315. Cysteine 386 and cysteine 389 are oxidised to a cystine. An N-linked (GlcNAc...) asparagine glycan is attached at asparagine 462.

This sequence belongs to the glycosyltransferase 10 family.

Its subcellular location is the endoplasmic reticulum membrane. The enzyme catalyses L-threonyl-[protein] + GDP-beta-L-fucose = 3-O-(alpha-L-fucosyl)-L-threonyl-[protein] + GDP + H(+). The catalysed reaction is L-seryl-[protein] + GDP-beta-L-fucose = 3-O-(alpha-L-fucosyl)-L-seryl-[protein] + GDP + H(+). It functions in the pathway protein modification; protein glycosylation. In terms of biological role, protein O-fucosyltransferase that specifically catalyzes O-fucosylation of serine or threonine residues in EMI domains of target proteins. Attaches fucose through an O-glycosidic linkage. O-fucosylation of EMI domain-containing proteins may be required for facilitating protein folding and secretion. The protein is GDP-fucose protein O-fucosyltransferase 3 (FUT10) of Gallus gallus (Chicken).